A 508-amino-acid chain; its full sequence is MQRLLTPVRQVLQVKRVMQEASLLPARLLPAAHPSFSTVPAVPLAKTDTWPKDVGILAMEVYFPAQYVDQTELEKFNKVEAGRYTVGLGQTQMGFCSVQEDVNSLCLTVVQQLMERTQLPWDSVGRLEVGTETIIDKSKAVKTVLMELFQDSGNTDIEGIDTTNACYGGTASLFNAANWMESSSWDGRYALVVCGDIAVYPSGNARPTGGAGAVAMLVGPEAPLVLERGLRGTHMENVYDFYKPDVTSEYPLVDGKLSIQCYLRALDKCYAFYRQKIEKQWKQAGIDRPFTLDDVQYMIFHTPFCKLVQKSLARLMFNDFLLASGDTQTGIYKGLEAFRGLKLEDTYTNKDVDKAFLKASLNMFNKKTKNSLYLSTYNGNMYTSSLYGCLASLLAHHSAQDLAGSRIGAFSYGSGLAASFFSFRVSQDASPGSPLEKLVSSTSDLQKRLASRKRVSPEEFTEIMNQREQYYHKMNFSPPGDKNSLFPGTWYLERVDELYRRKYARRPV.

The transit peptide at 1-37 (MQRLLTPVRQVLQVKRVMQEASLLPARLLPAAHPSFS) directs the protein to the mitochondrion. An N6-succinyllysine modification is found at lysine 52. Glutamate 80 and alanine 81 together coordinate (3S)-3-hydroxy-3-methylglutaryl-CoA. Glutamate 132 acts as the Proton donor/acceptor in catalysis. The (3S)-3-hydroxy-3-methylglutaryl-CoA site is built by cysteine 166, asparagine 204, and threonine 208. Catalysis depends on cysteine 166, which acts as the Acyl-thioester intermediate. Position 243 is an N6-acetyllysine (lysine 243). N6-acetyllysine; alternate is present on lysine 256. N6-succinyllysine; alternate is present on lysine 256. (3S)-3-hydroxy-3-methylglutaryl-CoA-binding residues include serine 258 and histidine 301. The active-site Proton donor/acceptor is histidine 301. Lysine 306 is subject to N6-acetyllysine. Lysine 310 is a (3S)-3-hydroxy-3-methylglutaryl-CoA binding site. Lysine 310 is modified (N6-acetyllysine; alternate). Lysine 310 bears the N6-succinyllysine; alternate mark. Lysine 333 carries the post-translational modification N6-succinyllysine. An N6-acetyllysine; alternate mark is found at lysine 342, lysine 350, lysine 354, and lysine 358. 4 positions are modified to N6-succinyllysine; alternate: lysine 342, lysine 350, lysine 354, and lysine 358. Asparagine 380 and serine 414 together coordinate (3S)-3-hydroxy-3-methylglutaryl-CoA. Serine 433 bears the Phosphoserine mark. The residue at position 437 (lysine 437) is an N6-acetyllysine. Serine 440 is subject to Phosphoserine. At lysine 447 the chain carries N6-acetyllysine; alternate. Residue lysine 447 is modified to N6-succinyllysine; alternate. Phosphoserine is present on serine 456. Lysine 473 bears the N6-acetyllysine; alternate mark. The residue at position 473 (lysine 473) is an N6-succinyllysine; alternate. A Phosphoserine modification is found at serine 477.

Belongs to the thiolase-like superfamily. HMG-CoA synthase family. Homodimer. Post-translationally, succinylated. Desuccinylated by SIRT5. Succinylation, at least at Lys-310, inhibits the enzymatic activity.

It is found in the mitochondrion. The catalysed reaction is acetoacetyl-CoA + acetyl-CoA + H2O = (3S)-3-hydroxy-3-methylglutaryl-CoA + CoA + H(+). It participates in metabolic intermediate biosynthesis; (R)-mevalonate biosynthesis; (R)-mevalonate from acetyl-CoA: step 2/3. Its function is as follows. Catalyzes the first irreversible step in ketogenesis, condensing acetyl-CoA to acetoacetyl-CoA to form HMG-CoA, which is converted by HMG-CoA reductase (HMGCR) into mevalonate. This Bos taurus (Bovine) protein is Hydroxymethylglutaryl-CoA synthase, mitochondrial (HMGCS2).